Consider the following 21-residue polypeptide: Ferredoxin (21 aa).

The 4Fe-4S ferredoxin-type domain occupies 2–21 (KVKVDADACIGCGVCVELCP). Positions 10, 13, and 16 each coordinate [4Fe-4S] cluster.

As to quaternary structure, monomer. [4Fe-4S] cluster serves as cofactor.

Functionally, ferredoxins are iron-sulfur proteins that transfer electrons in a wide variety of metabolic reactions. This is Ferredoxin (fdxA) from Pyrococcus woesei.